The primary structure comprises 314 residues: Tudor-interacting repair regulator protein (314 aa).

Gly2 is lipidated: N-myristoyl glycine.

It belongs to the Nudix hydrolase family. TIRR subfamily. Interacts (via the cytoplasmic part) with syndecan-4 (SDC4), but not with other syndecan proteins. In terms of processing, myristoylated in vitro; additional evidence is however required to confirm myristoylation in vivo. Ubiquitously expressed. Expressed in embryonic brain, eyes, gizzard, heart, intestine, kidney, liver, tibia and skin.

The protein localises to the nucleus. It is found in the cytoplasm. Its subcellular location is the cytoskeleton. The protein resides in the cell membrane. It localises to the cell junction. The protein localises to the focal adhesion. Key regulator of TP53BP1 required to stabilize TP53BP1 and regulate its recruitment to chromatin. The protein is Tudor-interacting repair regulator protein (NUDT16L1) of Gallus gallus (Chicken).